A 393-amino-acid polypeptide reads, in one-letter code: Probable xylan O-acetyltransferase 11 (393 aa).

The Cytoplasmic segment spans residues 1-9; sequence MHQPAIMQR. The helical; Signal-anchor for type II membrane protein transmembrane segment at 10-26 threads the bilayer; the sequence is ALAVVALLAAAAAIAAA. Residues 27-393 lie on the Lumenal side of the membrane; sequence QGESPELLPF…LFFPARDEAI (367 aa). Cystine bridges form between Cys45–Cys96, Cys67–Cys132, Cys76–Cys368, and Cys283–Cys364. An N-linked (GlcNAc...) asparagine glycan is attached at Asn102. The short motif at 119 to 121 is the GDS motif element; that stretch reads GDS. Residue Ser121 is the Nucleophile of the active site. N-linked (GlcNAc...) asparagine glycosylation is present at Asn325. Asp363 serves as the catalytic Proton donor. The DXXH motif motif lies at 363–366; it reads DCTH. Catalysis depends on His366, which acts as the Proton acceptor.

This sequence belongs to the PC-esterase family. TBL subfamily. In terms of tissue distribution, expressed in roots, leaves and stems.

It is found in the golgi apparatus membrane. In terms of biological role, probable xylan acetyltransferase required for 2-O- and 3-O-monoacetylation of xylosyl residues in xylan. Possesses extremely low activity in vitro. The sequence is that of Probable xylan O-acetyltransferase 11 from Oryza sativa subsp. japonica (Rice).